Consider the following 135-residue polypeptide: Lactoylglutathione lyase (135 aa).

Residues 2–126 (RLLHTMLRVG…DGYKIELIEE (125 aa)) enclose the VOC domain. Position 5 (His-5) interacts with Ni(2+). Arg-9 serves as a coordination point for substrate. Position 56 (Glu-56) interacts with Ni(2+). Substrate is bound by residues Asn-60 and His-74. Residues His-74 and Glu-122 each contribute to the Ni(2+) site. The active-site Proton donor/acceptor is the Glu-122.

This sequence belongs to the glyoxalase I family. Homodimer. Ni(2+) serves as cofactor.

The enzyme catalyses (R)-S-lactoylglutathione = methylglyoxal + glutathione. The protein operates within secondary metabolite metabolism; methylglyoxal degradation; (R)-lactate from methylglyoxal: step 1/2. Catalyzes the conversion of hemimercaptal, formed from methylglyoxal and glutathione, to S-lactoylglutathione. The chain is Lactoylglutathione lyase (gloA) from Escherichia coli O157:H7.